Reading from the N-terminus, the 229-residue chain is Uracil-DNA glycosylase (229 aa).

Residue Asp-67 is the Proton acceptor of the active site.

This sequence belongs to the uracil-DNA glycosylase (UDG) superfamily. UNG family.

The protein resides in the cytoplasm. The enzyme catalyses Hydrolyzes single-stranded DNA or mismatched double-stranded DNA and polynucleotides, releasing free uracil.. In terms of biological role, excises uracil residues from the DNA which can arise as a result of misincorporation of dUMP residues by DNA polymerase or due to deamination of cytosine. The polypeptide is Uracil-DNA glycosylase (Coxiella burnetii (strain CbuK_Q154) (Coxiella burnetii (strain Q154))).